Here is a 123-residue protein sequence, read N- to C-terminus: Large ribosomal subunit protein bL21 (123 aa).

It belongs to the bacterial ribosomal protein bL21 family. As to quaternary structure, part of the 50S ribosomal subunit. Contacts protein L20.

Its function is as follows. This protein binds to 23S rRNA in the presence of protein L20. This Rhizobium meliloti (strain 1021) (Ensifer meliloti) protein is Large ribosomal subunit protein bL21.